The primary structure comprises 178 residues: Crossover junction endodeoxyribonuclease RuvC (178 aa).

Catalysis depends on residues Asp-11, Glu-71, and Asp-143. The Mg(2+) site is built by Asp-11, Glu-71, and Asp-143.

The protein belongs to the RuvC family. As to quaternary structure, homodimer which binds Holliday junction (HJ) DNA. The HJ becomes 2-fold symmetrical on binding to RuvC with unstacked arms; it has a different conformation from HJ DNA in complex with RuvA. In the full resolvosome a probable DNA-RuvA(4)-RuvB(12)-RuvC(2) complex forms which resolves the HJ. Mg(2+) is required as a cofactor.

It localises to the cytoplasm. It catalyses the reaction Endonucleolytic cleavage at a junction such as a reciprocal single-stranded crossover between two homologous DNA duplexes (Holliday junction).. Its function is as follows. The RuvA-RuvB-RuvC complex processes Holliday junction (HJ) DNA during genetic recombination and DNA repair. Endonuclease that resolves HJ intermediates. Cleaves cruciform DNA by making single-stranded nicks across the HJ at symmetrical positions within the homologous arms, yielding a 5'-phosphate and a 3'-hydroxyl group; requires a central core of homology in the junction. The consensus cleavage sequence is 5'-(A/T)TT(C/G)-3'. Cleavage occurs on the 3'-side of the TT dinucleotide at the point of strand exchange. HJ branch migration catalyzed by RuvA-RuvB allows RuvC to scan DNA until it finds its consensus sequence, where it cleaves and resolves the cruciform DNA. The chain is Crossover junction endodeoxyribonuclease RuvC from Neisseria meningitidis serogroup A / serotype 4A (strain DSM 15465 / Z2491).